Reading from the N-terminus, the 442-residue chain is Putative zinc metalloprotease PM1991 (442 aa).

A Zn(2+)-binding site is contributed by H21. E22 is an active-site residue. Position 25 (H25) interacts with Zn(2+). The chain crosses the membrane as a helical span at residues 97-119 (AFVIAAGPIANFLFAILAYFTIY). A PDZ domain is found at 198–286 (DWRFDPEKES…FSFVVLTPEL (89 aa)). 2 consecutive transmembrane segments (helical) span residues 366–388 (IGLIYYLGFMALISVNLGIMNLF) and 418–440 (LSYRIGAAILMALMGFALFNDFL).

It belongs to the peptidase M50B family. The cofactor is Zn(2+).

It is found in the cell inner membrane. The sequence is that of Putative zinc metalloprotease PM1991 from Pasteurella multocida (strain Pm70).